Consider the following 386-residue polypeptide: Phosphoglycerate kinase (386 aa).

Substrate is bound by residues 21 to 23, R36, 59 to 62, R113, and R146; these read DLN and HLGR. Residues K197, E314, and 340 to 343 contribute to the ATP site; that span reads GGDT.

This sequence belongs to the phosphoglycerate kinase family. Monomer.

The protein resides in the cytoplasm. The enzyme catalyses (2R)-3-phosphoglycerate + ATP = (2R)-3-phospho-glyceroyl phosphate + ADP. Its pathway is carbohydrate degradation; glycolysis; pyruvate from D-glyceraldehyde 3-phosphate: step 2/5. This chain is Phosphoglycerate kinase, found in Vibrio campbellii (strain ATCC BAA-1116).